Consider the following 2347-residue polypeptide: tRNA(Glu)-specific nuclease WapA (2347 aa).

A signal peptide spans 1-45 (MSEYYFYYKRREKMKKRKRRNFKRFIAAFLVLALIISLVPADVLA). Positions 50-72 (EENGNRIVADDPEETLQKEQTEE) are disordered. 5 YD repeats span residues 1045-1078 (YNDK…ITGP), 1088-1116 (ENDL…LVKQ), 1649-1684 (YDET…LSNG), 1691-1729 (YDKE…PLGN), and 2095-2126 (YNAH…PTKT).

It belongs to the RHS/WapA nuclease family.

Its subcellular location is the secreted. It localises to the cell wall. In terms of biological role, toxic component of a toxin-immunity protein module, which functions as a cellular contact-dependent growth inhibition (CDI) system. A site-specific tRNA(Glu) nuclease, the C-terminus (residues 2214-2346) probably removes 2 or 4 nucleotides from the 3' end of tRNA(Glu) but not tRNA2(Arg) or tRNA3(Ser) (upon expression in E.coli), possibly endonucleolytically. The nuclease activity is neutralized by expression of the cognate immunity protein WapI from the same strain, but not its homolog from 2 other B.subtilis strains. The C-terminus cannot be expressed on its own in E.coli, however it can be cloned in the presence of its cognate immunity protein gene wapI. Cell contact is probably necessary for growth inhibition. This Bacillus subtilis subsp. natto (strain BEST195) protein is tRNA(Glu)-specific nuclease WapA (wapA).